The primary structure comprises 137 residues: Large ribosomal subunit protein uL16 (137 aa).

Belongs to the universal ribosomal protein uL16 family. Part of the 50S ribosomal subunit.

Functionally, binds 23S rRNA and is also seen to make contacts with the A and possibly P site tRNAs. In Rhizobium etli (strain CIAT 652), this protein is Large ribosomal subunit protein uL16.